Here is a 309-residue protein sequence, read N- to C-terminus: Putative S-adenosyl-L-methionine-dependent methyltransferase Mflv_0743 (309 aa).

S-adenosyl-L-methionine-binding positions include D134 and 163 to 164 (DL).

Belongs to the UPF0677 family.

In terms of biological role, exhibits S-adenosyl-L-methionine-dependent methyltransferase activity. This Mycolicibacterium gilvum (strain PYR-GCK) (Mycobacterium gilvum (strain PYR-GCK)) protein is Putative S-adenosyl-L-methionine-dependent methyltransferase Mflv_0743.